The sequence spans 410 residues: 2-epi-5-epi-valiolone synthase (410 aa).

NAD(+)-binding positions include Asp-66, 97–100, 130–134, 154–155, Lys-167, Lys-176, and 194–197; these read ETLK, GVLMD, TT, and FLAT. Lys-167 is a catalytic residue. A divalent metal cation-binding residues include Glu-209, His-280, and His-296.

The protein belongs to the sugar phosphate cyclases superfamily. EEVS family. The cofactor is NAD(+). It depends on Co(2+) as a cofactor.

The enzyme catalyses D-sedoheptulose 7-phosphate = 2-epi-5-epi-valiolone + phosphate. In terms of biological role, catalyzes the cyclization of D-sedoheptulose 7-phosphate to 2-epi-5-epi-valiolone. Involved in salbostatin biosynthesis. The polypeptide is 2-epi-5-epi-valiolone synthase (Streptomyces albus (strain ATCC 21838 / DSM 41398 / FERM P-419 / JCM 4703 / NBRC 107858)).